Reading from the N-terminus, the 30-residue chain is 2-enoate reductase (30 aa).

As to quaternary structure, dodecamer; tetramer of trimers. The cofactor is iron-sulfur cluster. It depends on FAD as a cofactor. Requires FMN as cofactor.

It carries out the reaction butanoate + NAD(+) = (2E)-2-butenoate + NADH + H(+). Involved in fermentation of amino acids (Stickland reaction) such as leucine, isoleucine, valine and phenylalanine. This chain is 2-enoate reductase, found in Clostridium tyrobutyricum.